The chain runs to 78 residues: DNA-directed RNA polymerase subunit Rpo5 (78 aa).

This sequence belongs to the archaeal Rpo5/eukaryotic RPB5 RNA polymerase subunit family. Part of the RNA polymerase complex.

The protein resides in the cytoplasm. The enzyme catalyses RNA(n) + a ribonucleoside 5'-triphosphate = RNA(n+1) + diphosphate. DNA-dependent RNA polymerase (RNAP) catalyzes the transcription of DNA into RNA using the four ribonucleoside triphosphates as substrates. In Methanococcus maripaludis (strain C7 / ATCC BAA-1331), this protein is DNA-directed RNA polymerase subunit Rpo5.